The sequence spans 175 residues: Crossover junction endodeoxyribonuclease RuvC (175 aa).

Active-site residues include D7, E68, and D141. Mg(2+) contacts are provided by D7, E68, and D141.

It belongs to the RuvC family. Homodimer which binds Holliday junction (HJ) DNA. The HJ becomes 2-fold symmetrical on binding to RuvC with unstacked arms; it has a different conformation from HJ DNA in complex with RuvA. In the full resolvosome a probable DNA-RuvA(4)-RuvB(12)-RuvC(2) complex forms which resolves the HJ. The cofactor is Mg(2+).

Its subcellular location is the cytoplasm. The catalysed reaction is Endonucleolytic cleavage at a junction such as a reciprocal single-stranded crossover between two homologous DNA duplexes (Holliday junction).. In terms of biological role, the RuvA-RuvB-RuvC complex processes Holliday junction (HJ) DNA during genetic recombination and DNA repair. Endonuclease that resolves HJ intermediates. Cleaves cruciform DNA by making single-stranded nicks across the HJ at symmetrical positions within the homologous arms, yielding a 5'-phosphate and a 3'-hydroxyl group; requires a central core of homology in the junction. The consensus cleavage sequence is 5'-(A/T)TT(C/G)-3'. Cleavage occurs on the 3'-side of the TT dinucleotide at the point of strand exchange. HJ branch migration catalyzed by RuvA-RuvB allows RuvC to scan DNA until it finds its consensus sequence, where it cleaves and resolves the cruciform DNA. The polypeptide is Crossover junction endodeoxyribonuclease RuvC (Salinispora arenicola (strain CNS-205)).